The chain runs to 480 residues: Glucosylglycerol phosphorylase (480 aa).

Aspartate 190 acts as the Nucleophile in catalysis. Substrate is bound at residue tyrosine 194. Glutamate 231 (proton donor) is an active-site residue. Residue glutamine 336 participates in substrate binding.

This sequence belongs to the glycosyl hydrolase 13 family. Sucrose phosphorylase subfamily.

It catalyses the reaction 2-O-(alpha-D-glucopyranosyl)glycerol + phosphate = alpha-D-glucose 1-phosphate + glycerol. Functionally, catalyzes the reversible phosphorolysis of 2-O-alpha-D-glucosylglycerol with retention of the anomeric configuration, forming alpha-D-glucose 1-phosphate and glycerol. Has most likely a catabolic role, either regulating the intracellular levels of glucosylglycerol, which acts as a compatible solute, or degrading it when the environmental conditions change. Cannot catalyze the phosphorolysis of sucrose or glucosylglycerate. The sequence is that of Glucosylglycerol phosphorylase from Marinobacter adhaerens (strain DSM 23420 / HP15).